A 336-amino-acid polypeptide reads, in one-letter code: DNA-directed RNA polymerase subunit alpha (336 aa).

The interval 1-238 (MNDLDLNLVP…NLFLPFLQAE (238 aa)) is alpha N-terminal domain (alpha-NTD). Residues 267-336 (AKKVTFQHIF…LQKRFGMRLQ (70 aa)) form an alpha C-terminal domain (alpha-CTD) region.

Belongs to the RNA polymerase alpha chain family. In terms of assembly, in plastids the minimal PEP RNA polymerase catalytic core is composed of four subunits: alpha, beta, beta', and beta''. When a (nuclear-encoded) sigma factor is associated with the core the holoenzyme is formed, which can initiate transcription.

The protein resides in the plastid. It localises to the chloroplast. The enzyme catalyses RNA(n) + a ribonucleoside 5'-triphosphate = RNA(n+1) + diphosphate. DNA-dependent RNA polymerase catalyzes the transcription of DNA into RNA using the four ribonucleoside triphosphates as substrates. The protein is DNA-directed RNA polymerase subunit alpha of Huperzia lucidula (Shining clubmoss).